A 366-amino-acid polypeptide reads, in one-letter code: Outer membrane porin C 2 (366 aa).

Residues 1–21 (MKLKIVAVVVTGLLAANVAHA) form the signal peptide.

It belongs to the Gram-negative porin family. Homotrimer. Forms mixed heterotrimers with OmpF and with PhoE; other mixed heterotrimers are also probable.

It is found in the cell outer membrane. Forms pores that allow passive diffusion of small molecules across the outer membrane. Plays a role in virulence. In Shigella flexneri serotype 5a (strain M90T), this protein is Outer membrane porin C 2.